Here is a 225-residue protein sequence, read N- to C-terminus: Glucose-induced degradation protein 8 homolog (225 aa).

Residues 22–54 (QRAEMNRLIMDYLVTEGYKEAAEKFRIESGTQP) form the LisH domain. The CTLH domain maps to 60–117 (SLDDRIKIREAVQKGDLEQAVSMTNKLNPDILDSNQQLYFHLQQQRLIELIREKDIEA).

This sequence belongs to the GID8 family.

The protein resides in the cytoplasm. The protein localises to the nucleus. Its function is as follows. Core component of the CTLH E3 ubiquitin-protein ligase complex that mediates ubiquitination and subsequent proteasomal degradation of target proteins. Acts as a positive regulator of Wnt signaling pathway by promoting beta-catenin (CTNNB1) nuclear accumulation. The polypeptide is Glucose-induced degradation protein 8 homolog (Nematostella vectensis (Starlet sea anemone)).